Here is a 108-residue protein sequence, read N- to C-terminus: Translation initiation factor 1A (108 aa).

One can recognise an S1-like domain in the interval 11 to 85; sequence PSRDVPKPEE…NRCDILYKYG (75 aa).

Belongs to the eIF-1A family.

Functionally, seems to be required for maximal rate of protein biosynthesis. Enhances ribosome dissociation into subunits and stabilizes the binding of the initiator Met-tRNA(I) to 40 S ribosomal subunits. The protein is Translation initiation factor 1A (eIF1A) of Saccharolobus islandicus (strain Y.N.15.51 / Yellowstone #2) (Sulfolobus islandicus).